A 619-amino-acid chain; its full sequence is Probable Xaa-Pro aminopeptidase P (619 aa).

4 residues coordinate Mn(2+): D415, D426, E524, and E538.

It belongs to the peptidase M24B family. Mn(2+) serves as cofactor.

The catalysed reaction is Release of any N-terminal amino acid, including proline, that is linked to proline, even from a dipeptide or tripeptide.. Catalyzes the removal of a penultimate prolyl residue from the N-termini of peptides. The protein is Probable Xaa-Pro aminopeptidase P (AMPP) of Fusarium vanettenii (strain ATCC MYA-4622 / CBS 123669 / FGSC 9596 / NRRL 45880 / 77-13-4) (Fusarium solani subsp. pisi).